Consider the following 199-residue polypeptide: uncharacterized protein (199 aa).

The next 7 helical transmembrane spans lie at 10-32 (LTSQ…FIGY), 37-59 (VYSA…INYY), 63-80 (LIVI…FALI), 83-100 (LGLI…GVYL), 104-121 (YQVY…INLF), 126-148 (LTVL…MGIT), and 163-185 (FDAI…TGII).

Its subcellular location is the cell membrane. This is an uncharacterized protein from Archaeoglobus fulgidus (strain ATCC 49558 / DSM 4304 / JCM 9628 / NBRC 100126 / VC-16).